Reading from the N-terminus, the 664-residue chain is Transketolase 1 (664 aa).

H26 contributes to the substrate binding site. Residues H66 and 114–116 (GPL) contribute to the thiamine diphosphate site. Residue D155 participates in Mg(2+) binding. The thiamine diphosphate site is built by G156 and N185. Mg(2+)-binding residues include N185 and I187. Residues H260, R357, and S384 each contribute to the substrate site. A thiamine diphosphate-binding site is contributed by H260. The active-site Proton donor is the E411. F437 is a binding site for thiamine diphosphate. 3 residues coordinate substrate: H461, D469, and R520.

It belongs to the transketolase family. In terms of assembly, homodimer. Requires Mg(2+) as cofactor. It depends on Ca(2+) as a cofactor. Mn(2+) serves as cofactor. Co(2+) is required as a cofactor. The cofactor is thiamine diphosphate.

It carries out the reaction D-sedoheptulose 7-phosphate + D-glyceraldehyde 3-phosphate = aldehydo-D-ribose 5-phosphate + D-xylulose 5-phosphate. In terms of biological role, catalyzes the transfer of a two-carbon ketol group from a ketose donor to an aldose acceptor, via a covalent intermediate with the cofactor thiamine pyrophosphate. This is Transketolase 1 (tkt1) from Vibrio vulnificus (strain YJ016).